Consider the following 66-residue polypeptide: Large ribosomal subunit protein uL29 (66 aa).

The protein belongs to the universal ribosomal protein uL29 family.

In Borrelia duttonii (strain Ly), this protein is Large ribosomal subunit protein uL29.